The following is a 176-amino-acid chain: Calcineurin subunit B type 2 (176 aa).

Glycine 2 is lipidated: N-myristoyl glycine. EF-hand domains follow at residues 18–53, 57–85, 87–122, and 128–163; these read DEIK…QQNP, RVID…FSVK, DEEQ…MVGN, and QLQQ…MEIH. Ca(2+)-binding residues include aspartate 31, aspartate 33, serine 35, serine 37, glutamate 42, aspartate 63, aspartate 65, asparagine 67, glutamate 69, glutamate 74, aspartate 100, aspartate 102, aspartate 104, and glutamate 111. The calcineurin A binding stretch occupies residues 131–136; sequence QLVDKS. Positions 141, 143, 145, 147, and 152 each coordinate Ca(2+).

The protein belongs to the calcineurin regulatory subunit family. In terms of assembly, forms a complex composed of a calmodulin-dependent catalytic subunit (also known as calcineurin A) and a regulatory Ca(2+)-binding subunit (also known as calcineurin B). There are three catalytic subunits, each encoded by a separate gene (PPP3CA, PPP3CB, and PPP3CC) and two regulatory subunits which are also encoded by separate genes (PPP3R1 and PPP3R2). Interacts with SPATA33 (via PQIIIT motif). In terms of tissue distribution, testis specific.

It is found in the mitochondrion. In terms of biological role, regulatory subunit of calcineurin, a calcium-dependent, calmodulin stimulated protein phosphatase. Confers calcium sensitivity. The sequence is that of Calcineurin subunit B type 2 (Ppp3r2) from Rattus norvegicus (Rat).